We begin with the raw amino-acid sequence, 296 residues long: Phosphatidylglycerol--prolipoprotein diacylglyceryl transferase (296 aa).

The disordered stretch occupies residues 1 to 21 (MRHRRRPGGRSTAGGTPVSQL). 7 helical membrane-spanning segments follow: residues 34 to 54 (GPLT…VAYI), 72 to 92 (ELCA…HVIT), 108 to 128 (FFIW…GLAI), 136 to 158 (GIRF…AIGR), 195 to 215 (FHPT…FLLW), 227 to 243 (LFTL…FWVE), and 258 to 278 (LNDV…IVLQ). Position 158 (R158) interacts with a 1,2-diacyl-sn-glycero-3-phospho-(1'-sn-glycerol).

It belongs to the Lgt family.

The protein resides in the cell membrane. The catalysed reaction is L-cysteinyl-[prolipoprotein] + a 1,2-diacyl-sn-glycero-3-phospho-(1'-sn-glycerol) = an S-1,2-diacyl-sn-glyceryl-L-cysteinyl-[prolipoprotein] + sn-glycerol 1-phosphate + H(+). Its pathway is protein modification; lipoprotein biosynthesis (diacylglyceryl transfer). Functionally, catalyzes the transfer of the diacylglyceryl group from phosphatidylglycerol to the sulfhydryl group of the N-terminal cysteine of a prolipoprotein, the first step in the formation of mature lipoproteins. The polypeptide is Phosphatidylglycerol--prolipoprotein diacylglyceryl transferase (Cutibacterium acnes (strain DSM 16379 / KPA171202) (Propionibacterium acnes)).